The sequence spans 757 residues: MDVNPTLLFLKVPAQNAISTTFPYTGDPPYSHGTGTGYTMDTVNRTHQYSEKGKWTTNTETGAPQLNPIDGPLPEDNEPSGYAQTDCVLEAMAFLEESHPGIFENSCLETMEVVQQTRVDRLTQGRQTYDWTLNRNQPAATALANTIEVFRSNGLTANESGRLIDFLKDVMESMDKEEMEITTHFQRKRRVRDNMTKKMVTQRTIGKKKQRVNKRSYLIRALTLNTMTKDAERGKLKRRAIATPGMQIRGFVYFVETLARSICEKLEQSGLPVGGNEKKAKLANVVRKMMTNSQDTELSFTITGDNTKWNENQNPRMFLAMITYITKNQPEWFRNVLSIAPIMFSNKMARLGKGYMFESKSMKLRTQIPAEMLASIDLKYFNESTRKKIEKIRPLLIDGTASLSPGMMMGMFNMLSTVLGVSILNLGQKRYTKTTYWWDGLQSSDDFALIVNAPNHEGIQAGVDRFYRTCKLVGINMSKKKSYINRTGTFEFTSFFYRYGFVANFSMELPSFGVSGINESADMSIGVTVIKNNMINNDLGPATAQMALQLFIKDYRYTYRCHRGDTQIQTRRSFELEKLWEQTRSKAGLLVSDGGPNLYNIRNLHIPEVCLKWELMDEDYQGRLCNPLNPFVSHKEIESVNNAVVMPAHGPAKSMEYDAVATTHSWIPKRNRSILNTSQRGILEDEQMYQKCCNLFEKFFPSSSYRRPVGISSMVEAMVSRARIDARIDFESGRIKKEEFAEIMKICSTIEELRRQK.

The disordered stretch occupies residues 50 to 82 (SEKGKWTTNTETGAPQLNPIDGPLPEDNEPSGY). Polar residues predominate over residues 55-64 (WTTNTETGAP). Short sequence motifs (nuclear localization signal) lie at residues 187–195 (RKRRVRDNM) and 203–216 (RTIG…NKRS). The tract at residues 249–256 (RGFVYFVE) is promoter-binding site. Residues 286-483 (VRKMMTNSQD…GINMSKKKSY (198 aa)) form the RdRp catalytic domain.

It belongs to the influenza viruses polymerase PB1 family. In terms of assembly, influenza RNA polymerase is composed of three subunits: PB1, PB2 and PA. Interacts (via N-terminus) with PA (via C-terminus). Interacts (via C-terminus) with PB2 (via N-terminus); this interaction is essential for transcription initiation. Phosphorylated by host PRKCA.

It is found in the host nucleus. The protein localises to the host cytoplasm. It catalyses the reaction RNA(n) + a ribonucleoside 5'-triphosphate = RNA(n+1) + diphosphate. Functionally, RNA-dependent RNA polymerase which is responsible for replication and transcription of virus RNA segments. The transcription of viral mRNAs occurs by a unique mechanism called cap-snatching. 5' methylated caps of cellular mRNAs are cleaved after 10-13 nucleotides by PA. In turn, these short capped RNAs are used as primers by PB1 for transcription of viral mRNAs. During virus replication, PB1 initiates RNA synthesis and copy vRNA into complementary RNA (cRNA) which in turn serves as a template for the production of more vRNAs. In Aves (whales), this protein is RNA-directed RNA polymerase catalytic subunit.